Here is a 158-residue protein sequence, read N- to C-terminus: Endoribonuclease YbeY (158 aa).

3 residues coordinate Zn(2+): His-124, His-128, and His-134.

Belongs to the endoribonuclease YbeY family. It depends on Zn(2+) as a cofactor.

The protein localises to the cytoplasm. Single strand-specific metallo-endoribonuclease involved in late-stage 70S ribosome quality control and in maturation of the 3' terminus of the 16S rRNA. The protein is Endoribonuclease YbeY of Caldanaerobacter subterraneus subsp. tengcongensis (strain DSM 15242 / JCM 11007 / NBRC 100824 / MB4) (Thermoanaerobacter tengcongensis).